Here is a 291-residue protein sequence, read N- to C-terminus: Ribosomal large subunit pseudouridine synthase B (291 aa).

One can recognise an S4 RNA-binding domain in the interval 3-75 (EKLQKVLARA…ICRVLAYYKP (73 aa)). The active-site Nucleophile is Asp-110. The segment at 256-291 (VEKDRRRMKANQIRRAVKRHSQVSGGRRSGGRNNNG) is disordered.

It belongs to the pseudouridine synthase RsuA family.

The enzyme catalyses uridine(2605) in 23S rRNA = pseudouridine(2605) in 23S rRNA. Functionally, responsible for synthesis of pseudouridine from uracil-2605 in 23S ribosomal RNA. The sequence is that of Ribosomal large subunit pseudouridine synthase B (rluB) from Escherichia coli (strain K12).